A 352-amino-acid chain; its full sequence is Phosphoribosylformylglycinamidine cyclo-ligase (352 aa).

This sequence belongs to the AIR synthase family.

The protein localises to the cytoplasm. It carries out the reaction 2-formamido-N(1)-(5-O-phospho-beta-D-ribosyl)acetamidine + ATP = 5-amino-1-(5-phospho-beta-D-ribosyl)imidazole + ADP + phosphate + H(+). It functions in the pathway purine metabolism; IMP biosynthesis via de novo pathway; 5-amino-1-(5-phospho-D-ribosyl)imidazole from N(2)-formyl-N(1)-(5-phospho-D-ribosyl)glycinamide: step 2/2. This is Phosphoribosylformylglycinamidine cyclo-ligase from Azoarcus sp. (strain BH72).